Here is a 220-residue protein sequence, read N- to C-terminus: Ribosomal RNA small subunit methyltransferase J (220 aa).

S-adenosyl-L-methionine contacts are provided by residues 55 to 56, 71 to 72, and Asp-123; these read RD and ER.

It belongs to the methyltransferase superfamily. RsmJ family.

Its subcellular location is the cytoplasm. It catalyses the reaction guanosine(1516) in 16S rRNA + S-adenosyl-L-methionine = N(2)-methylguanosine(1516) in 16S rRNA + S-adenosyl-L-homocysteine + H(+). In terms of biological role, specifically methylates the guanosine in position 1516 of 16S rRNA. The protein is Ribosomal RNA small subunit methyltransferase J of Rhodopseudomonas palustris (strain BisB5).